We begin with the raw amino-acid sequence, 436 residues long: Transcriptional regulator dmxR14 (436 aa).

Residues 1–27 (MEEAETNTQVDSVPSNSVRSGAELSSK) are compositionally biased toward polar residues. The interval 1–32 (MEEAETNTQVDSVPSNSVRSGAELSSKSKLRD) is disordered. Positions 34–61 (CHACARSKVRCPKQKPSCSRCEARGTTC) form a DNA-binding region, zn(2)-C6 fungal-type. Residues 67–136 (RRPGRRRETS…ITTVHNGPEN (70 aa)) are disordered. Over residues 90–136 (SHANNRNSPSFSSTRSTLPSPIASDSNSNFTQPQNSSITTVHNGPEN) the composition is skewed to polar residues.

The protein resides in the nucleus. In terms of biological role, transcriptional regulator; part of the gene cluster that mediates the biosynthesis of the dimeric xanthones cryptosporioptides. This Cryptosporiopsis sp. (strain 8999) protein is Transcriptional regulator dmxR14.